The sequence spans 751 residues: Amyloid-beta precursor protein (751 aa).

The first 17 residues, 1–17, serve as a signal peptide directing secretion; sequence MLPGLALLLLAAWTARA. Residues 18–682 are Extracellular-facing; it reads LEVPTDGNAG…AEDVGSNKGA (665 aa). Residues 28–123 are GFLD subdomain; sequence LLAEPQIAMF…PYRCLVGEFV (96 aa). The region spanning 28 to 189 is the E1 domain; sequence LLAEPQIAMF…RGVEFVCCPL (162 aa). Disulfide bonds link Cys-38–Cys-62, Cys-73–Cys-117, Cys-98–Cys-105, Cys-133–Cys-187, Cys-144–Cys-174, and Cys-158–Cys-186. 96–110 is a heparin binding site; the sequence is NWCKRDRKQCKTHPH. Residues 131–189 form a cuBD subdomain region; sequence DKCKFLHQERMDVCETHLHWHTVAKETCSEKSTNLHDYGMLLPCGIDKFRGVEFVCCPL. Positions 147, 151, and 168 each coordinate Cu(2+). Residues 181–188 form a zinc-binding region; the sequence is GVEFVCCP. Glu-183, Cys-186, and Cys-187 together coordinate Zn(2+). Residues 195-284 are disordered; it reads HVDSADAEED…TTTTTTESVE (90 aa). Residues Ser-198 and Ser-206 each carry the phosphoserine; by CK1 and CK2 modification. Sulfotyrosine occurs at positions 217 and 262. Over residues 228-264 the composition is skewed to acidic residues; that stretch reads VAEEEEVAEVEEEEADDDEDDEDGDEVEEEAEEPYEE. Positions 268–281 are enriched in low complexity; that stretch reads RTTSIATTTTTTTE. 3 disulfides stabilise this stretch: Cys-291-Cys-341, Cys-300-Cys-324, and Cys-316-Cys-337. Positions 291–341 constitute a BPTI/Kunitz inhibitor domain; the sequence is CSEQAETGPCRAMISRWYFDVTEGKCAPFFYGGCGGNRNNFDTEEYCMAVC. Heparin-binding regions lie at residues 316-344 and 363-428; these read CAPF…CGSV and PGDE…QEAA. Tyr-336 is modified (sulfotyrosine). Residues 344–346 carry the OX-2 motif; that stretch reads VIP. One can recognise an E2 domain in the interval 355–546; it reads AVDKYLETPG…EEIQDEVDEL (192 aa). A Phosphoserine modification is found at Ser-422. Tyr-478 is subject to Phosphotyrosine. The collagen-binding stretch occupies residues 504–521; it reads AAQIRSQVMTHLRVIYER. 2 N-linked (GlcNAc...) asparagine glycosylation sites follow: Asn-523 and Asn-552. The Cu(2+) site is built by His-658, Tyr-662, His-665, and His-666. Residues His-658, Tyr-662, His-665, and His-666 each coordinate Zn(2+). The interaction with PSEN1 stretch occupies residues 676–703; that stretch reads VGSNKGAIIGLMVGGVVIATVIVITLVM. The chain crosses the membrane as a helical span at residues 683–703; that stretch reads IIGLMVGGVVIATVIVITLVM. Residues 704 to 751 are Cytoplasmic-facing; that stretch reads LKKKQYTSIHHGVVEVDAAVTPEERHLSKMQQNGYENPTYKFFEQMQN. The short motif at 705-715 is the Basolateral sorting signal element; it reads KKKQYTSIHHG. The residue at position 710 (Thr-710) is a Phosphothreonine. The residue at position 711 (Ser-711) is a Phosphoserine; by APP-kinase I. The segment at 713 to 732 is interaction with G(o)-alpha; the sequence is HHGVVEVDAAVTPEERHLSK. Thr-724 is modified (phosphothreonine; by CDK5 and MAPK10). Positions 737-751 are required for the interaction with KIF5B and for anterograde transport in axons; the sequence is GYENPTYKFFEQMQN. Tyr-738 bears the Phosphotyrosine; by ABL1 mark. Residues 738-743 carry the YENPXY motif; contains endocytosis signal motif; the sequence is YENPTY. A Glycyl lysine isopeptide (Lys-Gly) (interchain with G-Cter in ubiquitin) cross-link involves residue Lys-744.

Belongs to the APP family. In terms of assembly, binds, via its C-terminus, to the PID domain of several cytoplasmic proteins, including APBB family members, the APBA family, MAPK8IP1, SHC1 and NUMB and DAB1. Binding to DAB1 inhibits its serine phosphorylation. Interacts (via NPXY motif) with DAB2 (via PID domain); the interaction is impaired by tyrosine phosphorylation of the NPXY motif. Also interacts with GPCR-like protein BPP, APPBP1, IB1, KNS2 (via its TPR domains), APPBP2 (via BaSS) and DDB1. In vitro, it binds MAPT via the MT-binding domains. Associates with microtubules in the presence of ATP and in a kinesin-dependent manner. Interacts, through a C-terminal domain, with GNAO1. Amyloid-beta protein 42 binds CHRNA7 in hippocampal neurons. Amyloid-beta associates with HADH2. Interacts with CPEB1, ANKS1B and AGER. Interacts with ITM2B. Interacts with ITM2C. Interacts with IDE. Can form homodimers; dimerization is enhanced in the presence of Cu(2+) ions. Can form homodimers; this is promoted by heparin binding. Amyloid-beta protein 40 interacts with S100A9. CTF-alpha product of APP interacts with GSAP. Isoform APP695 interacts with SORL1 (via N-terminal ectodomain); this interaction retains APP in the trans-Golgi network and reduces processing into soluble APP-alpha and amyloid-beta peptides. Isoform APP770 interacts with SORL1. The C99 fragment also interacts with SORL1. Interacts with PLD3. Interacts with VDAC1. Interacts with NSG1; could regulate APP processing. Amyloid-beta protein 42 interacts with FPR2. Interacts (via transmembrane region) with PSEN1; the interaction is direct. Interacts with LRRK2. Interacts (via cytoplasmic domain) with KIF5B. Interacts (via C-terminus) with APBB2/FE65L1 (via C-terminus). Interacts (via intracellular domain) with APBB3. Post-translationally, proteolytically processed under normal cellular conditions. Cleavage either by alpha-secretase, beta-secretase or theta-secretase leads to generation and extracellular release of soluble APP peptides, S-APP-alpha and S-APP-beta, and the retention of corresponding membrane-anchored C-terminal fragments, C80, C83 and C99. Subsequent processing of C80 and C83 by gamma-secretase yields P3 peptides. This is the major secretory pathway and is non-amyloidogenic. Alternatively, presenilin/nicastrin-mediated gamma-secretase processing of C99 releases the amyloid-beta proteins, amyloid-beta protein 40 and amyloid-beta protein 42, major components of amyloid plaques, and the cytotoxic C-terminal fragments, gamma-CTF(50), gamma-CTF(57) and gamma-CTF(59). PSEN1 cleavage is more efficient with C83 than with C99 as substrate (in vitro). Amyloid-beta protein 40 and Amyloid-beta protein 42 are cleaved by ACE. Many other minor amyloid-beta peptides, amyloid-beta 1-X peptides, are found in cerebral spinal fluid (CSF) including the amyloid-beta X-15 peptides, produced from the cleavage by alpha-secretase. In terms of processing, proteolytically cleaved by caspases during neuronal apoptosis. Cleavage at Asp-720 by either caspase-3, -8 or -9 results in the production of the neurotoxic C31 peptide and the increased production of amyloid-beta peptides. N- and O-glycosylated. Post-translationally, phosphorylation in the C-terminal on tyrosine, threonine and serine residues is neuron-specific. Phosphorylation can affect APP processing, neuronal differentiation and interaction with other proteins. Phosphorylated on Thr-724 in neuronal cells by Cdc5 kinase and Mapk10, in dividing cells by Cdc2 kinase in a cell-cycle dependent manner with maximal levels at the G2/M phase and, in vitro, by GSK-3-beta. The Thr-724 phosphorylated form causes a conformational change which reduces binding of Fe65 family members. In dopaminergic (DA) neurons, phosphorylation on Thr-724 by LRKK2 promotes the production and the nuclear translocation of the APP intracellular domain (AICD) which induces DA neuron apoptosis. Phosphorylation on Tyr-738 is required for SHC binding. Phosphorylated in the extracellular domain by casein kinases on both soluble and membrane-bound APP. This phosphorylation is inhibited by heparin. In terms of processing, trophic-factor deprivation triggers the cleavage of surface APP by beta-secretase to release sAPP-beta which is further cleaved to release an N-terminal fragment of APP (N-APP). Amyloid-beta peptides are degraded by IDE. Post-translationally, sulfated on tyrosine residues.

It localises to the cell membrane. The protein localises to the membrane. It is found in the perikaryon. Its subcellular location is the cell projection. The protein resides in the growth cone. It localises to the clathrin-coated pit. The protein localises to the early endosome. It is found in the cytoplasmic vesicle. Its subcellular location is the endoplasmic reticulum. The protein resides in the golgi apparatus. It localises to the secreted. The protein localises to the cell surface. It is found in the nucleus. Its subcellular location is the cytoplasm. Functions as a cell surface receptor and performs physiological functions on the surface of neurons relevant to neurite growth, neuronal adhesion and axonogenesis. Interaction between APP molecules on neighboring cells promotes synaptogenesis. Involved in cell mobility and transcription regulation through protein-protein interactions. Can promote transcription activation through binding to APBB1-KAT5 and inhibit Notch signaling through interaction with Numb. Couples to apoptosis-inducing pathways such as those mediated by G(o) and JIP. Inhibits G(o)-alpha ATPase activity. Acts as a kinesin I membrane receptor, mediating the axonal transport of beta-secretase and presenilin 1. By acting as a kinesin I membrane receptor, plays a role in axonal anterograde transport of cargo towards synapses in axons. May be involved in copper homeostasis/oxidative stress through copper ion reduction. In vitro, copper-metallated APP induces neuronal death directly or is potentiated through Cu(2+)-mediated low-density lipoprotein oxidation. Can regulate neurite outgrowth through binding to components of the extracellular matrix such as heparin and collagen I and IV. Induces a AGER-dependent pathway that involves activation of p38 MAPK, resulting in internalization of amyloid-beta peptide and mitochondrial dysfunction in cultured cortical neurons. Provides Cu(2+) ions for GPC1 which are required for release of nitric oxide (NO) and subsequent degradation of the heparan sulfate chains on GPC1. In terms of biological role, amyloid-beta peptides are lipophilic metal chelators with metal-reducing activity. Binds transient metals such as copper, zinc and iron. Its function is as follows. The gamma-CTF peptides as well as the caspase-cleaved peptides, including C31, are potent enhancers of neuronal apoptosis. The protein is Amyloid-beta precursor protein of Saimiri sciureus (Common squirrel monkey).